We begin with the raw amino-acid sequence, 92 residues long: DNA/RNA-binding protein Alba (92 aa).

Lys-11 is modified (N6-acetyllysine).

It belongs to the histone-like Alba family. Acetylated. Acetylation at Lys-11 decreases DNA-binding affinity.

Its subcellular location is the cytoplasm. It localises to the chromosome. Functionally, binds double-stranded DNA tightly but without sequence specificity. Involved in DNA compaction. In Pyrobaculum islandicum (strain DSM 4184 / JCM 9189 / GEO3), this protein is DNA/RNA-binding protein Alba.